Reading from the N-terminus, the 147-residue chain is Small ribosomal subunit protein bS6m (147 aa).

This sequence belongs to the bacterial ribosomal protein bS6 family. In terms of assembly, component of the mitochondrial ribosome small subunit (28S) which comprises a 12S rRNA and about 30 distinct proteins.

The protein localises to the mitochondrion. This Drosophila melanogaster (Fruit fly) protein is Small ribosomal subunit protein bS6m (mRpS6).